A 287-amino-acid polypeptide reads, in one-letter code: Urease accessory protein UreD (287 aa).

This sequence belongs to the UreD family. UreD, UreF and UreG form a complex that acts as a GTP-hydrolysis-dependent molecular chaperone, activating the urease apoprotein by helping to assemble the nickel containing metallocenter of UreC. The UreE protein probably delivers the nickel.

Its subcellular location is the cytoplasm. In terms of biological role, required for maturation of urease via the functional incorporation of the urease nickel metallocenter. In Herpetosiphon aurantiacus (strain ATCC 23779 / DSM 785 / 114-95), this protein is Urease accessory protein UreD.